A 1753-amino-acid chain; its full sequence is Negative regulator of sporulation PMD1 (1753 aa).

Kelch repeat units lie at residues 143 to 198 (NIYI…VLNE) and 206 to 253 (KLII…KILV). T298 carries the post-translational modification Phosphothreonine. Residues 651-664 (TTKFGNSSQSSNGS) are compositionally biased toward polar residues. Disordered regions lie at residues 651-753 (TTKF…TTCS) and 771-807 (LGLS…CTLS). The span at 670-683 (SKNGNSKSNSNTSL) shows a compositional bias: low complexity. Composition is skewed to polar residues over residues 690 to 699 (DFTSSTSSPK), 740 to 753 (TGTS…TTCS), 774 to 783 (SEQSGRSTRA), and 797 to 807 (NDGNDSNCTLS). A Phosphoserine modification is found at S838. Disordered regions lie at residues 875–915 (IASP…LGSS), 938–957 (PLEP…SSLA), and 962–988 (FGRD…ARRI). The span at 880-900 (QSRQTSFASTASTASVVSSTS) shows a compositional bias: low complexity. Residues 938–947 (PLEPLPPVPK) show a composition bias toward pro residues. Residues 979–988 (KSSSSDARRI) show a composition bias toward low complexity. Residues S1289, S1307, and S1356 each carry the phosphoserine modification. 3 disordered regions span residues 1312 to 1467 (SPAT…DLDS), 1604 to 1686 (PIFA…NKRF), and 1706 to 1753 (SAVN…GKRR). A compositionally biased stretch (polar residues) spans 1344–1379 (VSRQQNFPRRSSSFTETVPTEPTRYNYQNLDSSKSN). Residues 1399–1430 (NFDKYKVETLQKRNSNDGKDLDRTNDPLKNRG) show a composition bias toward basic and acidic residues. The span at 1653-1677 (IKFSQAPSTQISPRTSVTDFTASQQ) shows a compositional bias: polar residues. Position 1664 is a phosphoserine (S1664). Residues 1711-1723 (GRKESEGHCEDRS) show a composition bias toward basic and acidic residues.

The protein localises to the cytoplasm. Functionally, negatively regulates early sporulation-specific genes. Seems to exert its function by positively regulating the Ras/cAMP pathway. Required for growth under alkaline conditions. Acts synergetically with MDS3. The polypeptide is Negative regulator of sporulation PMD1 (PMD1) (Saccharomyces cerevisiae (strain ATCC 204508 / S288c) (Baker's yeast)).